A 423-amino-acid polypeptide reads, in one-letter code: Serine--tRNA ligase (423 aa).

Residues 107 to 130 (PHDSVPDGKSENDNREIRQWGAPP) are disordered. Over residues 110 to 124 (SVPDGKSENDNREIR) the composition is skewed to basic and acidic residues. 231–233 (TGE) is a binding site for L-serine. 262-264 (RSE) contacts ATP. L-serine is bound at residue E285. 349–352 (EISS) is an ATP binding site. An L-serine-binding site is contributed by S385.

The protein belongs to the class-II aminoacyl-tRNA synthetase family. Type-1 seryl-tRNA synthetase subfamily. In terms of assembly, homodimer. The tRNA molecule binds across the dimer.

The protein resides in the cytoplasm. The enzyme catalyses tRNA(Ser) + L-serine + ATP = L-seryl-tRNA(Ser) + AMP + diphosphate + H(+). It carries out the reaction tRNA(Sec) + L-serine + ATP = L-seryl-tRNA(Sec) + AMP + diphosphate + H(+). Its pathway is aminoacyl-tRNA biosynthesis; selenocysteinyl-tRNA(Sec) biosynthesis; L-seryl-tRNA(Sec) from L-serine and tRNA(Sec): step 1/1. Functionally, catalyzes the attachment of serine to tRNA(Ser). Is also able to aminoacylate tRNA(Sec) with serine, to form the misacylated tRNA L-seryl-tRNA(Sec), which will be further converted into selenocysteinyl-tRNA(Sec). In Coxiella burnetii (strain Dugway 5J108-111), this protein is Serine--tRNA ligase.